The primary structure comprises 264 residues: 4-hydroxy-tetrahydrodipicolinate reductase (264 aa).

8–13 (GPRGNM) contributes to the NAD(+) binding site. Lysine 36 lines the NADP(+) pocket. NAD(+) contacts are provided by residues 97-99 (GTT) and 123-126 (APNF). Histidine 153 acts as the Proton donor/acceptor in catalysis. Position 154 (histidine 154) interacts with (S)-2,3,4,5-tetrahydrodipicolinate. Lysine 157 functions as the Proton donor in the catalytic mechanism. 163-164 (GT) is a (S)-2,3,4,5-tetrahydrodipicolinate binding site.

Belongs to the DapB family.

It is found in the cytoplasm. It carries out the reaction (S)-2,3,4,5-tetrahydrodipicolinate + NAD(+) + H2O = (2S,4S)-4-hydroxy-2,3,4,5-tetrahydrodipicolinate + NADH + H(+). The catalysed reaction is (S)-2,3,4,5-tetrahydrodipicolinate + NADP(+) + H2O = (2S,4S)-4-hydroxy-2,3,4,5-tetrahydrodipicolinate + NADPH + H(+). Its pathway is amino-acid biosynthesis; L-lysine biosynthesis via DAP pathway; (S)-tetrahydrodipicolinate from L-aspartate: step 4/4. Functionally, catalyzes the conversion of 4-hydroxy-tetrahydrodipicolinate (HTPA) to tetrahydrodipicolinate. The sequence is that of 4-hydroxy-tetrahydrodipicolinate reductase from Shouchella clausii (strain KSM-K16) (Alkalihalobacillus clausii).